Here is a 55-residue protein sequence, read N- to C-terminus: Locustin (55 aa).

4 disulfide bridges follow: Cys-5–Cys-40, Cys-7–Cys-36, Cys-10–Cys-32, and Cys-17–Cys-54.

Monomer. In terms of tissue distribution, stored in hemocyte granules and secreted into the hemolymph.

It is found in the secreted. In terms of biological role, has antibacterial activity against Gram-positive bacterium M.luteus. The chain is Locustin from Locusta migratoria (Migratory locust).